The sequence spans 324 residues: Beta-ketoacyl-[acyl-carrier-protein] synthase III (324 aa).

Residues Cys-111 and His-251 contribute to the active site. Positions 252-256 (QANTR) are ACP-binding. Asn-281 is an active-site residue.

Belongs to the thiolase-like superfamily. FabH family. As to quaternary structure, homodimer.

It is found in the plastid. It localises to the chloroplast. The enzyme catalyses malonyl-[ACP] + acetyl-CoA + H(+) = 3-oxobutanoyl-[ACP] + CO2 + CoA. It participates in lipid metabolism; fatty acid biosynthesis. Functionally, catalyzes the condensation reaction of fatty acid synthesis by the addition to an acyl acceptor of two carbons from malonyl-ACP. Catalyzes the first condensation reaction which initiates fatty acid synthesis and may therefore play a role in governing the total rate of fatty acid production. Possesses both acetoacetyl-ACP synthase and acetyl transacylase activities. Its substrate specificity determines the biosynthesis of branched-chain and/or straight-chain of fatty acids. In Pyropia yezoensis (Susabi-nori), this protein is Beta-ketoacyl-[acyl-carrier-protein] synthase III.